Reading from the N-terminus, the 63-residue chain is UPF0337 protein PSPTO_1596 (63 aa).

The tract at residues 20–63 (KQAVGKATDNTKLQAEGKAQELKGEGQQAKGEVKDAVKKGVDKV) is disordered. A compositionally biased stretch (basic and acidic residues) spans 50–63 (GEVKDAVKKGVDKV).

It belongs to the UPF0337 (CsbD) family.

The chain is UPF0337 protein PSPTO_1596 from Pseudomonas syringae pv. tomato (strain ATCC BAA-871 / DC3000).